The following is a 795-amino-acid chain: Protocadherin beta-12 (795 aa).

The first 26 residues, 1 to 26, serve as a signal peptide directing secretion; the sequence is MENGGAGTLQIRQVLLFFVLLGMSQA. The Extracellular portion of the chain corresponds to 27–690; it reads GSETGNFLVM…AQADSLTVYL (664 aa). 5 Cadherin domains span residues 35-133, 138-242, 247-347, 352-451, and 456-561; these read VMEE…SPVF, MLLE…SPEF, YEVK…APEI, ITSP…APAF, and YALF…SPFV. N418, N436, N487, and N567 each carry an N-linked (GlcNAc...) asparagine glycan. Residues 568–671 enclose the Cadherin 6 domain; that stretch reads GSAPCTELVP…LVDGFSQPYL (104 aa). The helical transmembrane segment at 691 to 711 threads the bilayer; the sequence is VVALASVSSLFLFSVLLFVAV. Over 712–795 the chain is Cytoplasmic; it reads RLCRRSRAAP…NPPFQNNLGF (84 aa).

It localises to the cell membrane. Its function is as follows. Potential calcium-dependent cell-adhesion protein. May be involved in the establishment and maintenance of specific neuronal connections in the brain. The chain is Protocadherin beta-12 (PCDHB12) from Homo sapiens (Human).